The chain runs to 61 residues: MAKLQIKLVRSVIGTTPNQKKNVEALGLRKREQVVVKEDNAQTRGMINKVSHLLEVTEIAE.

Belongs to the universal ribosomal protein uL30 family. Part of the 50S ribosomal subunit.

The protein is Large ribosomal subunit protein uL30 of Clostridioides difficile (strain 630) (Peptoclostridium difficile).